A 467-amino-acid chain; its full sequence is Glutamate--tRNA ligase (467 aa).

The 'HIGH' region motif lies at 9–19 (PSPTGYLHIGG). Residues 237–241 (KLSKR) carry the 'KMSKS' region motif. Residue Lys240 participates in ATP binding.

Belongs to the class-I aminoacyl-tRNA synthetase family. Glutamate--tRNA ligase type 1 subfamily. As to quaternary structure, monomer.

It localises to the cytoplasm. It catalyses the reaction tRNA(Glu) + L-glutamate + ATP = L-glutamyl-tRNA(Glu) + AMP + diphosphate. In terms of biological role, catalyzes the attachment of glutamate to tRNA(Glu) in a two-step reaction: glutamate is first activated by ATP to form Glu-AMP and then transferred to the acceptor end of tRNA(Glu). The polypeptide is Glutamate--tRNA ligase (Xanthomonas campestris pv. campestris (strain 8004)).